Reading from the N-terminus, the 428-residue chain is Elongation factor 1-alpha (428 aa).

Residues 5–217 (KPHVNIVFIG…DQIPEPEKPV (213 aa)) form the tr-type G domain. A G1 region spans residues 14 to 21 (GHVDHGKS). 14 to 21 (GHVDHGKS) contributes to the GTP binding site. Residue serine 21 participates in Mg(2+) binding. A G2 region spans residues 68 to 72 (GITID). A G3 region spans residues 89 to 92 (DAPG). Residues 89-93 (DAPGH) and 144-147 (NKMD) contribute to the GTP site. The interval 144–147 (NKMD) is G4. The G5 stretch occupies residues 181-183 (SAW).

This sequence belongs to the TRAFAC class translation factor GTPase superfamily. Classic translation factor GTPase family. EF-Tu/EF-1A subfamily.

The protein localises to the cytoplasm. The enzyme catalyses GTP + H2O = GDP + phosphate + H(+). Functionally, GTP hydrolase that promotes the GTP-dependent binding of aminoacyl-tRNA to the A-site of ribosomes during protein biosynthesis. The sequence is that of Elongation factor 1-alpha from Pyrococcus abyssi (strain GE5 / Orsay).